The chain runs to 204 residues: 8-oxoguanine DNA glycosylase/AP lyase (204 aa).

Catalysis depends on residues Lys128 and Asp146.

The protein belongs to the type-2 OGG1 family.

The catalysed reaction is 2'-deoxyribonucleotide-(2'-deoxyribose 5'-phosphate)-2'-deoxyribonucleotide-DNA = a 3'-end 2'-deoxyribonucleotide-(2,3-dehydro-2,3-deoxyribose 5'-phosphate)-DNA + a 5'-end 5'-phospho-2'-deoxyribonucleoside-DNA + H(+). Functionally, catalyzes the excision of an oxidatively damaged form of guanine (7,8-dihydro-8-oxoguanine = 8-oxoG) from DNA. Also cleaves the DNA backbone at apurinic/apyrimidinic sites (AP sites). This Sulfurisphaera tokodaii (strain DSM 16993 / JCM 10545 / NBRC 100140 / 7) (Sulfolobus tokodaii) protein is 8-oxoguanine DNA glycosylase/AP lyase.